Here is a 447-residue protein sequence, read N- to C-terminus: N-succinylarginine dihydrolase (447 aa).

Substrate-binding positions include 19-28, Asn110, and 137-138; these read AGLSFGNEAS and HR. Glu174 is an active-site residue. Arg212 is a substrate binding site. The active site involves His248. Substrate contacts are provided by Asp250 and Asn359. The Nucleophile role is filled by Cys365.

This sequence belongs to the succinylarginine dihydrolase family. In terms of assembly, homodimer.

The enzyme catalyses N(2)-succinyl-L-arginine + 2 H2O + 2 H(+) = N(2)-succinyl-L-ornithine + 2 NH4(+) + CO2. Its pathway is amino-acid degradation; L-arginine degradation via AST pathway; L-glutamate and succinate from L-arginine: step 2/5. In terms of biological role, catalyzes the hydrolysis of N(2)-succinylarginine into N(2)-succinylornithine, ammonia and CO(2). The chain is N-succinylarginine dihydrolase from Escherichia coli O17:K52:H18 (strain UMN026 / ExPEC).